Reading from the N-terminus, the 267-residue chain is Undecaprenyl-diphosphatase (267 aa).

7 consecutive transmembrane segments (helical) span residues 1–21, 40–60, 85–105, 111–131, 190–210, 219–239, and 245–265; these read MSLF…FLPV, GQVI…LYFW, LAMG…ALHF, ALRS…LLWW, MLMS…DVAV, DGAI…SLMM, and VSFT…LGIA.

It belongs to the UppP family.

It localises to the cell inner membrane. It catalyses the reaction di-trans,octa-cis-undecaprenyl diphosphate + H2O = di-trans,octa-cis-undecaprenyl phosphate + phosphate + H(+). In terms of biological role, catalyzes the dephosphorylation of undecaprenyl diphosphate (UPP). Confers resistance to bacitracin. In Ruegeria pomeroyi (strain ATCC 700808 / DSM 15171 / DSS-3) (Silicibacter pomeroyi), this protein is Undecaprenyl-diphosphatase.